Consider the following 349-residue polypeptide: Dihydroorotate dehydrogenase (quinone) (349 aa).

FMN-binding positions include 67-71 (AGLDK) and threonine 91. Lysine 71 serves as a coordination point for substrate. 116-120 (NRLGF) lines the substrate pocket. Residues asparagine 147 and asparagine 180 each contribute to the FMN site. Substrate is bound at residue asparagine 180. The active-site Nucleophile is the serine 183. Substrate is bound at residue asparagine 185. FMN contacts are provided by lysine 225 and threonine 253. A substrate-binding site is contributed by 254 to 255 (NT). Residues glycine 276, glycine 305, and 326 to 327 (YT) contribute to the FMN site.

This sequence belongs to the dihydroorotate dehydrogenase family. Type 2 subfamily. As to quaternary structure, monomer. The cofactor is FMN.

The protein localises to the cell membrane. The catalysed reaction is (S)-dihydroorotate + a quinone = orotate + a quinol. It participates in pyrimidine metabolism; UMP biosynthesis via de novo pathway; orotate from (S)-dihydroorotate (quinone route): step 1/1. Functionally, catalyzes the conversion of dihydroorotate to orotate with quinone as electron acceptor. The chain is Dihydroorotate dehydrogenase (quinone) from Bordetella parapertussis (strain 12822 / ATCC BAA-587 / NCTC 13253).